The chain runs to 226 residues: 2-C-methyl-D-erythritol 4-phosphate cytidylyltransferase (226 aa).

It belongs to the IspD/TarI cytidylyltransferase family. IspD subfamily.

It carries out the reaction 2-C-methyl-D-erythritol 4-phosphate + CTP + H(+) = 4-CDP-2-C-methyl-D-erythritol + diphosphate. It functions in the pathway isoprenoid biosynthesis; isopentenyl diphosphate biosynthesis via DXP pathway; isopentenyl diphosphate from 1-deoxy-D-xylulose 5-phosphate: step 2/6. Its function is as follows. Catalyzes the formation of 4-diphosphocytidyl-2-C-methyl-D-erythritol from CTP and 2-C-methyl-D-erythritol 4-phosphate (MEP). The protein is 2-C-methyl-D-erythritol 4-phosphate cytidylyltransferase of Prochlorococcus marinus (strain MIT 9312).